We begin with the raw amino-acid sequence, 529 residues long: Pheophorbide a oxygenase, chloroplastic (529 aa).

2 disordered regions span residues 1–24 (MPVM…RRVP) and 46–72 (LRVA…TSSA). A chloroplast-targeting transit peptide spans 1–47 (MPVMAPTASLLLSPRPLPASRRVPSLPALSASGRLRLRRARADTRLR). Positions 82–194 (WYPVSLVEDL…TLVSQGLLFV (113 aa)) constitute a Rieske domain. [2Fe-2S] cluster is bound by residues C124, H126, C144, and H147.

The cofactor is [2Fe-2S] cluster. Expressed in leaves. Expressed at low levels in roots, stems, panicles and seeds.

It is found in the plastid. It localises to the chloroplast. The catalysed reaction is pheophorbide a + 2 reduced [2Fe-2S]-[ferredoxin] + O2 + 2 H(+) = red chlorophyll catabolite + 2 oxidized [2Fe-2S]-[ferredoxin]. Its pathway is porphyrin-containing compound metabolism; chlorophyll degradation. Functionally, catalyzes the key reaction of chlorophyll catabolism, porphyrin macrocycle cleavage of pheophorbide a (pheide a) to a primary fluorescent catabolite (pFCC). Works in a two-step reaction with red chlorophyll catabolite reductase (RCCR). Creates the intermediate RCC through the opening of the porphyrin macrocycle by the introduction of one atom of molecular oxygen at the alpha-methine bridge. Seems to be specific for pheide a. Belongs to the chlorophyll catabolic enzymes (CCEs). May play a role in senescence and response to wounding. The sequence is that of Pheophorbide a oxygenase, chloroplastic from Oryza sativa subsp. japonica (Rice).